We begin with the raw amino-acid sequence, 352 residues long: tRNA pseudouridine synthase D (352 aa).

D81 (nucleophile) is an active-site residue. The TRUD domain occupies 157-303; sequence GIPNYFGVQR…MEHERRILRL (147 aa).

It belongs to the pseudouridine synthase TruD family.

The catalysed reaction is uridine(13) in tRNA = pseudouridine(13) in tRNA. In terms of biological role, responsible for synthesis of pseudouridine from uracil-13 in transfer RNAs. The sequence is that of tRNA pseudouridine synthase D from Pseudomonas syringae pv. tomato (strain ATCC BAA-871 / DC3000).